We begin with the raw amino-acid sequence, 490 residues long: Glutamate--tRNA ligase (490 aa).

The 'HIGH' region signature appears at 12 to 22 (PSPTGTPHVGL). A 'KMSKS' region motif is present at residues 256–260 (KLSKR). Position 259 (K259) interacts with ATP.

It belongs to the class-I aminoacyl-tRNA synthetase family. Glutamate--tRNA ligase type 1 subfamily. As to quaternary structure, monomer.

It is found in the cytoplasm. It catalyses the reaction tRNA(Glu) + L-glutamate + ATP = L-glutamyl-tRNA(Glu) + AMP + diphosphate. In terms of biological role, catalyzes the attachment of glutamate to tRNA(Glu) in a two-step reaction: glutamate is first activated by ATP to form Glu-AMP and then transferred to the acceptor end of tRNA(Glu). The sequence is that of Glutamate--tRNA ligase from Mycobacterium sp. (strain KMS).